We begin with the raw amino-acid sequence, 174 residues long: Keratin-associated protein 9-2 (174 aa).

17 repeat units span residues 8 to 12 (CCQPT), 13 to 17 (CCRTT), 18 to 22 (CCRTT), 37 to 41 (CCQPA), 42 to 46 (CCVSS), 51 to 55 (CCRPT), 61 to 65 (CCRTT), 66 to 70 (CCQPT), 75 to 79 (CCQPS), 80 to 84 (CCSTP), 85 to 89 (CCQPT), 90 to 94 (CCGSS), 95 to 99 (CCGQT), 144 to 148 (CCRPA), 149 to 153 (CCETT), 154 to 158 (CCRTT), and 168 to 172 (CCQPS). Positions 8–172 (CCQPTCCRTT…TCVSSCCQPS (165 aa)) are 17 X 5 AA repeats of C-C-[RQVSGE]-[SPTQ]-[TASP].

This sequence belongs to the KRTAP type 9 family. In terms of assembly, interacts with hair keratins.

In the hair cortex, hair keratin intermediate filaments are embedded in an interfilamentous matrix, consisting of hair keratin-associated proteins (KRTAP), which are essential for the formation of a rigid and resistant hair shaft through their extensive disulfide bond cross-linking with abundant cysteine residues of hair keratins. The matrix proteins include the high-sulfur and high-glycine-tyrosine keratins. This is Keratin-associated protein 9-2 (KRTAP9-2) from Homo sapiens (Human).